A 469-amino-acid chain; its full sequence is Uronate isomerase (469 aa).

It belongs to the metallo-dependent hydrolases superfamily. Uronate isomerase family.

The enzyme catalyses D-glucuronate = D-fructuronate. The catalysed reaction is aldehydo-D-galacturonate = keto-D-tagaturonate. It functions in the pathway carbohydrate metabolism; pentose and glucuronate interconversion. The polypeptide is Uronate isomerase (Pectobacterium carotovorum subsp. carotovorum (strain PC1)).